A 224-amino-acid chain; its full sequence is Serum amyloid P-component (224 aa).

An N-terminal signal peptide occupies residues M1–C20. Positions K25 to D224 constitute a Pentraxin (PTX) domain. The N-linked (GlcNAc...) asparagine glycan is linked to N52. A disulfide bridge connects residues C56 and C115. 6 residues coordinate Ca(2+): D78, N79, E156, Q157, D158, and Q168.

It belongs to the pentraxin family. In terms of assembly, homopentamer. Pentraxin (or pentaxin) have a discoid arrangement of 5 non-covalently bound subunits. Ca(2+) is required as a cofactor.

It is found in the secreted. This Mus musculus (Mouse) protein is Serum amyloid P-component (Apcs).